A 342-amino-acid polypeptide reads, in one-letter code: Holliday junction branch migration complex subunit RuvB (342 aa).

Residues 2 to 181 form a large ATPase domain (RuvB-L) region; sequence TDNPLLSSAS…FGIPVRLQFY (180 aa). Residues L20, R21, G62, K65, T66, T67, R171, Y181, and R218 each contribute to the ATP site. Residue T66 coordinates Mg(2+). Positions 182–252 are small ATPAse domain (RuvB-S); it reads SVEELERVVA…IADNALTRLE (71 aa). The head domain (RuvB-H) stretch occupies residues 255–342; it reads KIGLDLQDRR…QMPGLFGPDE (88 aa). Positions 291, 310, and 315 each coordinate DNA.

The protein belongs to the RuvB family. Homohexamer. Forms an RuvA(8)-RuvB(12)-Holliday junction (HJ) complex. HJ DNA is sandwiched between 2 RuvA tetramers; dsDNA enters through RuvA and exits via RuvB. An RuvB hexamer assembles on each DNA strand where it exits the tetramer. Each RuvB hexamer is contacted by two RuvA subunits (via domain III) on 2 adjacent RuvB subunits; this complex drives branch migration. In the full resolvosome a probable DNA-RuvA(4)-RuvB(12)-RuvC(2) complex forms which resolves the HJ.

The protein localises to the cytoplasm. The enzyme catalyses ATP + H2O = ADP + phosphate + H(+). The RuvA-RuvB-RuvC complex processes Holliday junction (HJ) DNA during genetic recombination and DNA repair, while the RuvA-RuvB complex plays an important role in the rescue of blocked DNA replication forks via replication fork reversal (RFR). RuvA specifically binds to HJ cruciform DNA, conferring on it an open structure. The RuvB hexamer acts as an ATP-dependent pump, pulling dsDNA into and through the RuvAB complex. RuvB forms 2 homohexamers on either side of HJ DNA bound by 1 or 2 RuvA tetramers; 4 subunits per hexamer contact DNA at a time. Coordinated motions by a converter formed by DNA-disengaged RuvB subunits stimulates ATP hydrolysis and nucleotide exchange. Immobilization of the converter enables RuvB to convert the ATP-contained energy into a lever motion, pulling 2 nucleotides of DNA out of the RuvA tetramer per ATP hydrolyzed, thus driving DNA branch migration. The RuvB motors rotate together with the DNA substrate, which together with the progressing nucleotide cycle form the mechanistic basis for DNA recombination by continuous HJ branch migration. Branch migration allows RuvC to scan DNA until it finds its consensus sequence, where it cleaves and resolves cruciform DNA. This chain is Holliday junction branch migration complex subunit RuvB, found in Novosphingobium aromaticivorans (strain ATCC 700278 / DSM 12444 / CCUG 56034 / CIP 105152 / NBRC 16084 / F199).